Here is a 56-residue protein sequence, read N- to C-terminus: Protein hunchback (56 aa).

3 consecutive C2H2-type zinc fingers follow at residues 1–5 (HLRNH), 11–33 (FRCDKCDYQCVNKSMLNSHLKSH), and 39–56 (YRCADCTYATKYCHSLKL).

Belongs to the hunchback C2H2-type zinc-finger protein family.

It is found in the nucleus. Gap class segmentation protein that controls development of head structures. The sequence is that of Protein hunchback (hb) from Locusta migratoria (Migratory locust).